We begin with the raw amino-acid sequence, 152 residues long: ESAT-6 secretion machinery protein EssA (152 aa).

Topologically, residues 1-114 (MLMNSVIALT…PYIQNKQEKK (114 aa)) are cytoplasmic. Residues 115–135 (IFPYILMSVGAFLTLGFVIFS) traverse the membrane as a helical segment. At 136–152 (IHKGRRTKNESARKSNI) the chain is on the extracellular side.

Belongs to the EssA family.

The protein resides in the cell membrane. Component of the ESAT-6 secretion system (Ess). Required for the secretion of EsxA and EsxB. The polypeptide is ESAT-6 secretion machinery protein EssA (Staphylococcus aureus (strain Mu50 / ATCC 700699)).